The primary structure comprises 290 residues: MRIADYSVTKAVLDRHGFTFKKSFGQNFLTDTNILQKIVDTAEIDQNVNVIEIGPGIGALTEFLAENAAEVMAFEIDDRLVPILADTLRDFDNVQVVNQDILKADLQTQIKQFKNPDLPIKVVANLPYYITTPILMHLIESKIPFQEFVVMMQREVADRISAEPNTKAYGSLSIAVQYYMTAKVAFIVPRTVFVPAPNVDSAILKMVRRDQPLIEVKDEDFFFRVSRLSFVHRRKTLWNNLTSHFGKSEDIKAKLEKGLALADIKPSIRGEALSIQDFGKLADALKEVGL.

6 residues coordinate S-adenosyl-L-methionine: asparagine 27, leucine 29, glycine 54, glutamate 75, aspartate 100, and asparagine 125.

The protein belongs to the class I-like SAM-binding methyltransferase superfamily. rRNA adenine N(6)-methyltransferase family. RsmA subfamily.

Its subcellular location is the cytoplasm. It catalyses the reaction adenosine(1518)/adenosine(1519) in 16S rRNA + 4 S-adenosyl-L-methionine = N(6)-dimethyladenosine(1518)/N(6)-dimethyladenosine(1519) in 16S rRNA + 4 S-adenosyl-L-homocysteine + 4 H(+). Specifically dimethylates two adjacent adenosines (A1518 and A1519) in the loop of a conserved hairpin near the 3'-end of 16S rRNA in the 30S particle. May play a critical role in biogenesis of 30S subunits. The sequence is that of Ribosomal RNA small subunit methyltransferase A from Streptococcus pyogenes serotype M1.